The primary structure comprises 98 residues: Protein Asterix (98 aa).

The next 2 membrane-spanning stretches (helical) occupy residues 32-52 and 78-98; these read LFSI…CLWV and VSLS…NLFV.

It belongs to the Asterix family.

The protein localises to the membrane. The protein is Protein Asterix of Dictyostelium discoideum (Social amoeba).